The sequence spans 251 residues: MSTFPKRILLKLSGETLIGNQGFGIQQQACLQITKSIQQIQQLGIQLGIVIGGGNIFRGINLKANGMPRVPADHMGMLATLLNGIALQQALISLEVKTCVMSALDCPKVAESYQWSKALQYLEEGVVVIFVGGTGNPYFTTDTAAALRASEIQANLLLKATKVDGIYNQDPLKNTQAVKYDRISYSQVLAEKLQVMDATAIALCRNHQIPIFVFNMKRLFENRLDHVLTDYSHGTLVDDGEIGHEANKLDR.

11-14 (KLSG) is a binding site for ATP. The segment at 19–24 (GNQGFG) is involved in allosteric activation by GTP. Glycine 53 serves as a coordination point for UMP. 2 residues coordinate ATP: glycine 54 and arginine 58. UMP contacts are provided by residues aspartate 73 and 134–141 (TGNPYFTT). Residues threonine 161, tyrosine 167, and aspartate 170 each contribute to the ATP site.

The protein belongs to the UMP kinase family. As to quaternary structure, homohexamer.

It localises to the cytoplasm. The catalysed reaction is UMP + ATP = UDP + ADP. It participates in pyrimidine metabolism; CTP biosynthesis via de novo pathway; UDP from UMP (UMPK route): step 1/1. Its activity is regulated as follows. Allosterically activated by GTP. Inhibited by UTP. Its function is as follows. Catalyzes the reversible phosphorylation of UMP to UDP. The sequence is that of Uridylate kinase from Protochlamydia amoebophila (strain UWE25).